The following is a 995-amino-acid chain: UPF0182 protein MUL_2505 (995 aa).

7 consecutive transmembrane segments (helical) span residues 18–38 (VLIL…RLID), 63–83 (FLVF…GLAL), 113–133 (LFGI…AQSY), 175–195 (FVAI…FGGI), 210–230 (IQLV…YWLN), 259–279 (KLIL…AIVL), and 287–307 (IGLV…PMIV). Positions 900 to 947 (AATGIQPTEGGAPANVPPNNAPSPEALPGTPPSPPTAVPPAPEASVTL) are disordered. The span at 928 to 941 (GTPPSPPTAVPPAP) shows a compositional bias: pro residues.

Belongs to the UPF0182 family.

It is found in the cell membrane. The protein is UPF0182 protein MUL_2505 of Mycobacterium ulcerans (strain Agy99).